Reading from the N-terminus, the 98-residue chain is NADH-ubiquinone oxidoreductase chain 4L (98 aa).

Helical transmembrane passes span 1–21, 27–47, and 61–81; these read MTPT…GMLT, VASL…ATLI, and IILL…LISI.

The protein belongs to the complex I subunit 4L family. In terms of assembly, core subunit of respiratory chain NADH dehydrogenase (Complex I) which is composed of 45 different subunits.

It is found in the mitochondrion inner membrane. It carries out the reaction a ubiquinone + NADH + 5 H(+)(in) = a ubiquinol + NAD(+) + 4 H(+)(out). Core subunit of the mitochondrial membrane respiratory chain NADH dehydrogenase (Complex I) which catalyzes electron transfer from NADH through the respiratory chain, using ubiquinone as an electron acceptor. Part of the enzyme membrane arm which is embedded in the lipid bilayer and involved in proton translocation. This is NADH-ubiquinone oxidoreductase chain 4L (MT-ND4L) from Macaca fascicularis (Crab-eating macaque).